Reading from the N-terminus, the 207-residue chain is Large ribosomal subunit protein uL3c (207 aa).

Residues 115-151 form a disordered region; sequence IGKGFAGNQKRHNFSRGPMTHGSKNHRLPGSIGAGST.

The protein belongs to the universal ribosomal protein uL3 family. In terms of assembly, part of the 50S ribosomal subunit.

Its subcellular location is the plastid. The protein resides in the chloroplast. In terms of biological role, one of the primary rRNA binding proteins, it binds directly near the 3'-end of the 23S rRNA, where it nucleates assembly of the 50S subunit. The polypeptide is Large ribosomal subunit protein uL3c (rpl3) (Emiliania huxleyi (Coccolithophore)).